The chain runs to 208 residues: Uracil phosphoribosyltransferase (208 aa).

5-phospho-alpha-D-ribose 1-diphosphate contacts are provided by residues R78, R103, and 130-138; that span reads DPMLATGGT. Residues I193 and 198–200 each bind uracil; that span reads GDA. 5-phospho-alpha-D-ribose 1-diphosphate is bound at residue D199.

It belongs to the UPRTase family. It depends on Mg(2+) as a cofactor.

The catalysed reaction is UMP + diphosphate = 5-phospho-alpha-D-ribose 1-diphosphate + uracil. It functions in the pathway pyrimidine metabolism; UMP biosynthesis via salvage pathway; UMP from uracil: step 1/1. Allosterically activated by GTP. In terms of biological role, catalyzes the conversion of uracil and 5-phospho-alpha-D-ribose 1-diphosphate (PRPP) to UMP and diphosphate. This chain is Uracil phosphoribosyltransferase, found in Nitratidesulfovibrio vulgaris (strain DSM 19637 / Miyazaki F) (Desulfovibrio vulgaris).